The sequence spans 475 residues: Eukaryotic translation initiation factor 3 subunit L (475 aa).

In terms of domain architecture, PCI spans 257-451 (DAIRMFSHIL…DLDYAMQGDL (195 aa)).

Belongs to the eIF-3 subunit L family. As to quaternary structure, component of the eukaryotic translation initiation factor 3 (eIF-3) complex.

Its subcellular location is the cytoplasm. Its function is as follows. Component of the eukaryotic translation initiation factor 3 (eIF-3) complex, which is involved in protein synthesis of a specialized repertoire of mRNAs and, together with other initiation factors, stimulates binding of mRNA and methionyl-tRNAi to the 40S ribosome. The eIF-3 complex specifically targets and initiates translation of a subset of mRNAs involved in cell proliferation. This Botryotinia fuckeliana (strain B05.10) (Noble rot fungus) protein is Eukaryotic translation initiation factor 3 subunit L.